A 423-amino-acid polypeptide reads, in one-letter code: Glutamate-1-semialdehyde 2,1-aminomutase (423 aa).

Position 266 is an N6-(pyridoxal phosphate)lysine (K266).

This sequence belongs to the class-III pyridoxal-phosphate-dependent aminotransferase family. HemL subfamily. Homodimer. Pyridoxal 5'-phosphate serves as cofactor.

The protein resides in the cytoplasm. It catalyses the reaction (S)-4-amino-5-oxopentanoate = 5-aminolevulinate. The protein operates within porphyrin-containing compound metabolism; protoporphyrin-IX biosynthesis; 5-aminolevulinate from L-glutamyl-tRNA(Glu): step 2/2. This is Glutamate-1-semialdehyde 2,1-aminomutase from Nitratidesulfovibrio vulgaris (strain DP4) (Desulfovibrio vulgaris).